The following is a 446-amino-acid chain: Probable D-serine dehydratase (446 aa).

Lys-116 is modified (N6-(pyridoxal phosphate)lysine).

It belongs to the serine/threonine dehydratase family. DsdA subfamily. It depends on pyridoxal 5'-phosphate as a cofactor.

The enzyme catalyses D-serine = pyruvate + NH4(+). In Bacillus anthracis (strain CDC 684 / NRRL 3495), this protein is Probable D-serine dehydratase.